The following is a 263-amino-acid chain: MLPQDPSTEPTPADDAAPVDSAGQASAPSPADPEGVAHPRRIRSFVRRAGRTSTGQQRAIDEVGPRMMVPYAPQPLDWEATFGRKAPSILEIGFGMGETTAHIAGLRPQDNFLGCEVHEPGVGALLKLIDERGLANVRILQHDAVEVIAHMLTDDCLDGVHIYFPDPWHKKRHNKRRLVQPPLVKVLAARLKPGGYIHCATDWEEYAHQMLEVLSGEPLLENTSTAADGFAERPDYRPVTKFERRGVRLGHGVWDVVFRKRAA.

The span at 1–10 (MLPQDPSTEP) shows a compositional bias: polar residues. The segment at 1-38 (MLPQDPSTEPTPADDAAPVDSAGQASAPSPADPEGVAH) is disordered. S-adenosyl-L-methionine contacts are provided by Glu91, Glu116, Asp143, and Asp166. Residue Asp166 is part of the active site. Residue Lys170 coordinates substrate. Residues 172–177 (RHNKRR) are interaction with RNA. Substrate contacts are provided by residues Asp202 and 240–243 (TKFE).

The protein belongs to the class I-like SAM-binding methyltransferase superfamily. TrmB family.

The catalysed reaction is guanosine(46) in tRNA + S-adenosyl-L-methionine = N(7)-methylguanosine(46) in tRNA + S-adenosyl-L-homocysteine. It functions in the pathway tRNA modification; N(7)-methylguanine-tRNA biosynthesis. Catalyzes the formation of N(7)-methylguanine at position 46 (m7G46) in tRNA. The chain is tRNA (guanine-N(7)-)-methyltransferase from Cupriavidus necator (strain ATCC 17699 / DSM 428 / KCTC 22496 / NCIMB 10442 / H16 / Stanier 337) (Ralstonia eutropha).